The primary structure comprises 529 residues: Probable pectinesterase/pectinesterase inhibitor 35 (529 aa).

An N-terminal signal peptide occupies residues 1–34; it reads MATTSFSLPNHKFGIKLMLFLVLNLLSLQTSVFA. Residues 36 to 180 are pectinesterase inhibitor 35; it reads SSNSKFTKIS…TGLLTNSLDM (145 aa). The segment at 42 to 64 is disordered; that stretch reads TKISRHPNSDSSSRTKPSTSSNK. Residues 50 to 64 are compositionally biased toward low complexity; sequence SDSSSRTKPSTSSNK. Residues N86, N169, and N193 are each glycosylated (N-linked (GlcNAc...) asparagine). A pectinesterase 35 region spans residues 228–514; sequence HAVVAADGSG…FTVSGFIDGN (287 aa). Residues T302 and Q332 each coordinate substrate. D355 (proton donor; for pectinesterase activity) is an active-site residue. D376 serves as the catalytic Nucleophile; for pectinesterase activity. Residues R434 and W436 each coordinate substrate.

It in the N-terminal section; belongs to the PMEI family. This sequence in the C-terminal section; belongs to the pectinesterase family. Expressed in siliques.

It is found in the secreted. The protein resides in the cell wall. The enzyme catalyses [(1-&gt;4)-alpha-D-galacturonosyl methyl ester](n) + n H2O = [(1-&gt;4)-alpha-D-galacturonosyl](n) + n methanol + n H(+). Its pathway is glycan metabolism; pectin degradation; 2-dehydro-3-deoxy-D-gluconate from pectin: step 1/5. In terms of biological role, acts in the modification of cell walls via demethylesterification of cell wall pectin. The polypeptide is Probable pectinesterase/pectinesterase inhibitor 35 (PME35) (Arabidopsis thaliana (Mouse-ear cress)).